A 239-amino-acid chain; its full sequence is Lactate utilization protein A (239 aa).

This sequence belongs to the LutA/YkgE family.

Functionally, is involved in L-lactate degradation and allows cells to grow with lactate as the sole carbon source. This is Lactate utilization protein A from Bacillus cytotoxicus (strain DSM 22905 / CIP 110041 / 391-98 / NVH 391-98).